The chain runs to 345 residues: N-acetyl-gamma-glutamyl-phosphate reductase (345 aa).

Residue Cys149 is part of the active site.

The protein belongs to the NAGSA dehydrogenase family. Type 1 subfamily.

The protein resides in the cytoplasm. It catalyses the reaction N-acetyl-L-glutamate 5-semialdehyde + phosphate + NADP(+) = N-acetyl-L-glutamyl 5-phosphate + NADPH + H(+). It functions in the pathway amino-acid biosynthesis; L-arginine biosynthesis; N(2)-acetyl-L-ornithine from L-glutamate: step 3/4. Functionally, catalyzes the NADPH-dependent reduction of N-acetyl-5-glutamyl phosphate to yield N-acetyl-L-glutamate 5-semialdehyde. This Desulforapulum autotrophicum (strain ATCC 43914 / DSM 3382 / VKM B-1955 / HRM2) (Desulfobacterium autotrophicum) protein is N-acetyl-gamma-glutamyl-phosphate reductase.